A 207-amino-acid chain; its full sequence is Probable GTP-binding protein EngB (207 aa).

Residues 24–199 enclose the EngB-type G domain; it reads GGYEVAFAGR…RGIVGGWLGL (176 aa). GTP-binding positions include 32-39, 59-63, 77-80, 144-147, and 178-180; these read GRSNAGKS, GRTQQ, DLPG, TKAD, and YSG. Ser39 and Thr61 together coordinate Mg(2+).

The protein belongs to the TRAFAC class TrmE-Era-EngA-EngB-Septin-like GTPase superfamily. EngB GTPase family. Mg(2+) serves as cofactor.

Its function is as follows. Necessary for normal cell division and for the maintenance of normal septation. In Xanthomonas campestris pv. campestris (strain 8004), this protein is Probable GTP-binding protein EngB.